Consider the following 161-residue polypeptide: SsrA-binding protein (161 aa).

This sequence belongs to the SmpB family.

The protein localises to the cytoplasm. In terms of biological role, required for rescue of stalled ribosomes mediated by trans-translation. Binds to transfer-messenger RNA (tmRNA), required for stable association of tmRNA with ribosomes. tmRNA and SmpB together mimic tRNA shape, replacing the anticodon stem-loop with SmpB. tmRNA is encoded by the ssrA gene; the 2 termini fold to resemble tRNA(Ala) and it encodes a 'tag peptide', a short internal open reading frame. During trans-translation Ala-aminoacylated tmRNA acts like a tRNA, entering the A-site of stalled ribosomes, displacing the stalled mRNA. The ribosome then switches to translate the ORF on the tmRNA; the nascent peptide is terminated with the 'tag peptide' encoded by the tmRNA and targeted for degradation. The ribosome is freed to recommence translation, which seems to be the essential function of trans-translation. This chain is SsrA-binding protein, found in Desulforamulus reducens (strain ATCC BAA-1160 / DSM 100696 / MI-1) (Desulfotomaculum reducens).